The sequence spans 506 residues: Deoxyribodipyrimidine photo-lyase (506 aa).

Over residues 1–21 (MPPTSVSPPRTAPGPANPSPA) the composition is skewed to pro residues. Residues 1–33 (MPPTSVSPPRTAPGPANPSPAHPSRVRVIHPGG) are disordered. A Photolyase/cryptochrome alpha/beta domain is found at 38–171 (GPVVYWMLRD…AVHQVDAHNV (134 aa)). FAD is bound by residues Tyr268 and 282–285 (SGLS). Phosphoserine is present on Ser312. Residues 319-327 (ELVVRRELA), Lys390, Asn421, Asp427, and 427-429 (DGR) each bind FAD. Residues 487-506 (KKRNAEESPNPVVKLSKSQH) are disordered.

Belongs to the DNA photolyase class-2 family. It depends on FAD as a cofactor. As to expression, expressed in proliferating tissues. Highly expressed in roots and shoot apical meristem (SAM). Expressed in leaves, flag leaves, and panicle.

The protein localises to the nucleus. It carries out the reaction cyclobutadipyrimidine (in DNA) = 2 pyrimidine residues (in DNA).. In terms of biological role, involved in repair of UV radiation-induced DNA damage. Catalyzes the light-dependent monomerization (300-600 nm) of cyclobutylpyrimidine dimers (CPDs), which are formed between adjacent bases on the same DNA strand upon exposure to ultraviolet radiation. Required for plant survival in the presence of UV-B light. Not involved in the repair of (6-4) photoproducts. This Oryza sativa subsp. japonica (Rice) protein is Deoxyribodipyrimidine photo-lyase (PHR).